The sequence spans 499 residues: Cytochrome P450 71A27 (499 aa).

Residues 3-23 (MILISLCLTTLLAFLFLKPLL) form a helical membrane-spanning segment. Position 438 (Cys438) interacts with heme.

Belongs to the cytochrome P450 family. Requires heme as cofactor.

The protein resides in the membrane. This chain is Cytochrome P450 71A27 (CYP71A27), found in Arabidopsis thaliana (Mouse-ear cress).